The following is a 212-amino-acid chain: Nucleoredoxin-like protein 1 (212 aa).

Residues 1–164 (MASLFSGRIL…AAEVLDRNFQ (164 aa)) form the Thioredoxin domain. The disordered stretch occupies residues 191 to 212 (AARGGRDPGGGGGEEGGAGGLF). Positions 197–212 (DPGGGGGEEGGAGGLF) are enriched in gly residues.

The protein belongs to the nucleoredoxin family. As to quaternary structure, interacts with isoform 1 of BSG.

Its subcellular location is the cell projection. The protein resides in the cilium. It is found in the photoreceptor outer segment. Plays an important role in retinal cone photoreceptor survival. In association with glucose transporter SLC16A1/GLUT1 and BSG, promotes retinal cone survival by enhancing aerobic glycolysis and accelerating the entry of glucose into photoreceptors. May play a role in cone cell viability, slowing down cone degeneration, does not seem to play a role in degenerating rods. The protein is Nucleoredoxin-like protein 1 (NXNL1) of Homo sapiens (Human).